A 375-amino-acid chain; its full sequence is Antichymotrypsin-2 (375 aa).

This sequence belongs to the serpin family. Hemolymph.

It is found in the secreted. This Bombyx mori (Silk moth) protein is Antichymotrypsin-2.